Reading from the N-terminus, the 406-residue chain is Cysteine desulfurase (406 aa).

At lysine 226 the chain carries N6-(pyridoxal phosphate)lysine. Cysteine 364 serves as the catalytic Cysteine persulfide intermediate.

It belongs to the class-V pyridoxal-phosphate-dependent aminotransferase family. Csd subfamily. In terms of assembly, homodimer. Interacts with SufE and the SufBCD complex composed of SufB, SufC and SufD. The interaction with SufE is required to mediate the direct transfer of the sulfur atom from the S-sulfanylcysteine. Pyridoxal 5'-phosphate serves as cofactor.

Its subcellular location is the cytoplasm. The enzyme catalyses (sulfur carrier)-H + L-cysteine = (sulfur carrier)-SH + L-alanine. It carries out the reaction L-selenocysteine + AH2 = hydrogenselenide + L-alanine + A + H(+). It functions in the pathway cofactor biosynthesis; iron-sulfur cluster biosynthesis. In terms of biological role, cysteine desulfurases mobilize the sulfur from L-cysteine to yield L-alanine, an essential step in sulfur metabolism for biosynthesis of a variety of sulfur-containing biomolecules. Component of the suf operon, which is activated and required under specific conditions such as oxidative stress and iron limitation. Acts as a potent selenocysteine lyase in vitro, that mobilizes selenium from L-selenocysteine. Selenocysteine lyase activity is however unsure in vivo. This is Cysteine desulfurase from Shigella sonnei (strain Ss046).